The chain runs to 73 residues: uncharacterized protein (73 aa).

Transmembrane regions (helical) follow at residues isoleucine 10–alanine 30 and tyrosine 42–isoleucine 62.

Its subcellular location is the cell membrane. This is an uncharacterized protein from Archaeoglobus fulgidus (strain ATCC 49558 / DSM 4304 / JCM 9628 / NBRC 100126 / VC-16).